Here is a 257-residue protein sequence, read N- to C-terminus: Large ribosomal subunit protein uL2 (257 aa).

Residues lysine 42 and lysine 149 each participate in a glycyl lysine isopeptide (Lys-Gly) (interchain with G-Cter in SUMO2) cross-link. The disordered stretch occupies residues 207-232 (VEHPFGGGNHQHIGKPSTIRRDAPAG). A (3S)-3-hydroxyhistidine modification is found at histidine 216. Glycyl lysine isopeptide (Lys-Gly) (interchain with G-Cter in SUMO2) cross-links involve residues lysine 234 and lysine 250.

It belongs to the universal ribosomal protein uL2 family. As to quaternary structure, component of the large ribosomal subunit. Interacts with CRY1. Post-translationally, hydroxylated on His-216 by RIOX1. The modification is impaired by hypoxia.

The protein resides in the cytoplasm. Functionally, component of the large ribosomal subunit. The ribosome is a large ribonucleoprotein complex responsible for the synthesis of proteins in the cell. This Bos taurus (Bovine) protein is Large ribosomal subunit protein uL2 (RPL8).